The chain runs to 194 residues: Peptidyl-tRNA hydrolase (194 aa).

A tRNA-binding site is contributed by Tyr-17. His-22 serves as the catalytic Proton acceptor. Residues Tyr-68, Asn-70, and Asn-116 each coordinate tRNA.

Belongs to the PTH family. In terms of assembly, monomer.

The protein resides in the cytoplasm. The catalysed reaction is an N-acyl-L-alpha-aminoacyl-tRNA + H2O = an N-acyl-L-amino acid + a tRNA + H(+). Functionally, hydrolyzes ribosome-free peptidyl-tRNAs (with 1 or more amino acids incorporated), which drop off the ribosome during protein synthesis, or as a result of ribosome stalling. In terms of biological role, catalyzes the release of premature peptidyl moieties from peptidyl-tRNA molecules trapped in stalled 50S ribosomal subunits, and thus maintains levels of free tRNAs and 50S ribosomes. The protein is Peptidyl-tRNA hydrolase of Azotobacter vinelandii (strain DJ / ATCC BAA-1303).